A 902-amino-acid polypeptide reads, in one-letter code: Protein translocase subunit SecA (902 aa).

Residues Gln87, Gly105–Thr109, and Asp512 each bind ATP. The interval Leu851–Gln902 is disordered. Cys886, Cys888, Cys897, and His898 together coordinate Zn(2+). Positions Lys892–Gln902 are enriched in basic residues.

This sequence belongs to the SecA family. In terms of assembly, monomer and homodimer. Part of the essential Sec protein translocation apparatus which comprises SecA, SecYEG and auxiliary proteins SecDF-YajC and YidC. Requires Zn(2+) as cofactor.

It is found in the cell inner membrane. The protein localises to the cytoplasm. The enzyme catalyses ATP + H2O + cellular proteinSide 1 = ADP + phosphate + cellular proteinSide 2.. In terms of biological role, part of the Sec protein translocase complex. Interacts with the SecYEG preprotein conducting channel. Has a central role in coupling the hydrolysis of ATP to the transfer of proteins into and across the cell membrane, serving both as a receptor for the preprotein-SecB complex and as an ATP-driven molecular motor driving the stepwise translocation of polypeptide chains across the membrane. The chain is Protein translocase subunit SecA from Sodalis glossinidius (strain morsitans).